The following is a 179-amino-acid chain: Ribosomal-protein-serine acetyltransferase (179 aa).

The N-acetyltransferase domain maps to 11 to 172 (LELHAVAENH…NDAYDDVNLY (162 aa)).

Belongs to the acetyltransferase family. RimL subfamily.

The protein resides in the cytoplasm. The catalysed reaction is N-terminal L-seryl-[ribosomal protein bL12] + acetyl-CoA = N-terminal N(alpha)-acetyl-L-seryl-[ribosomal protein bL12] + CoA + H(+). Functionally, this enzyme acetylates the N-terminal serine of ribosomal protein bL12, converting it into the acetylated form of bL12 known as bL7. In Escherichia coli (strain K12), this protein is Ribosomal-protein-serine acetyltransferase.